The chain runs to 310 residues: Small ribosomal subunit protein uS2 (310 aa).

Residues 249–272 (WERDLLEGEKAEKKDDAEAAEKPA) show a composition bias toward basic and acidic residues. The segment at 249-310 (WERDLLEGEK…EAPAADAEQA (62 aa)) is disordered. The span at 273-310 (EAPAAEAPAAEAAEAPAAEAAPAEEPAAEAPAADAEQA) shows a compositional bias: low complexity.

It belongs to the universal ribosomal protein uS2 family.

The protein is Small ribosomal subunit protein uS2 (rpsB) of Streptomyces coelicolor (strain ATCC BAA-471 / A3(2) / M145).